Here is a 269-residue protein sequence, read N- to C-terminus: Phosphate import ATP-binding protein PstB 1 (269 aa).

In terms of domain architecture, ABC transporter spans 25 to 264 (LSTEDLHVFY…PQVDLTNDYI (240 aa)). 57–64 (GPSGSGKS) is a binding site for ATP.

The protein belongs to the ABC transporter superfamily. Phosphate importer (TC 3.A.1.7) family. In terms of assembly, the complex is composed of two ATP-binding proteins (PstB), two transmembrane proteins (PstC and PstA) and a solute-binding protein (PstS).

It is found in the cell membrane. It catalyses the reaction phosphate(out) + ATP + H2O = ADP + 2 phosphate(in) + H(+). In terms of biological role, part of the ABC transporter complex PstSACB involved in phosphate import. Responsible for energy coupling to the transport system. This chain is Phosphate import ATP-binding protein PstB 1, found in Lactiplantibacillus plantarum (strain ATCC BAA-793 / NCIMB 8826 / WCFS1) (Lactobacillus plantarum).